The following is a 333-amino-acid chain: Transcription initiation factor IIB (333 aa).

The segment at 33 to 64 (EVYKCPICGNDKFVYNYERGEAVCIVCGAVVQ) adopts a TFIIB-type zinc-finger fold. Zn(2+)-binding residues include Cys37, Cys40, Cys56, and Cys59. Tandem repeats lie at residues 149–232 (QELE…LREL) and 243–324 (LYIS…ELAK).

Belongs to the TFIIB family.

Stabilizes TBP binding to an archaeal box-A promoter. Also responsible for recruiting RNA polymerase II to the pre-initiation complex (DNA-TBP-TFIIB). This chain is Transcription initiation factor IIB, found in Pyrobaculum aerophilum (strain ATCC 51768 / DSM 7523 / JCM 9630 / CIP 104966 / NBRC 100827 / IM2).